We begin with the raw amino-acid sequence, 132 residues long: Small ribosomal subunit protein uS8 (132 aa).

It belongs to the universal ribosomal protein uS8 family. In terms of assembly, part of the 30S ribosomal subunit. Contacts proteins S5 and S12.

Its function is as follows. One of the primary rRNA binding proteins, it binds directly to 16S rRNA central domain where it helps coordinate assembly of the platform of the 30S subunit. This is Small ribosomal subunit protein uS8 from Bacillus pumilus (strain SAFR-032).